Here is a 181-residue protein sequence, read N- to C-terminus: Large ribosomal subunit protein uL5 (181 aa).

The protein belongs to the universal ribosomal protein uL5 family. Part of the 50S ribosomal subunit; part of the 5S rRNA/L5/L18/L25 subcomplex. Contacts the 5S rRNA and the P site tRNA. Forms a bridge to the 30S subunit in the 70S ribosome.

In terms of biological role, this is one of the proteins that bind and probably mediate the attachment of the 5S RNA into the large ribosomal subunit, where it forms part of the central protuberance. In the 70S ribosome it contacts protein S13 of the 30S subunit (bridge B1b), connecting the 2 subunits; this bridge is implicated in subunit movement. Contacts the P site tRNA; the 5S rRNA and some of its associated proteins might help stabilize positioning of ribosome-bound tRNAs. In Picosynechococcus sp. (strain ATCC 27264 / PCC 7002 / PR-6) (Agmenellum quadruplicatum), this protein is Large ribosomal subunit protein uL5.